Here is a 212-residue protein sequence, read N- to C-terminus: Ribosomal RNA small subunit methyltransferase G (212 aa).

Residues glycine 80, leucine 85, 131-132 (AE), and arginine 146 each bind S-adenosyl-L-methionine.

The protein belongs to the methyltransferase superfamily. RNA methyltransferase RsmG family.

It localises to the cytoplasm. The catalysed reaction is guanosine(527) in 16S rRNA + S-adenosyl-L-methionine = N(7)-methylguanosine(527) in 16S rRNA + S-adenosyl-L-homocysteine. Its function is as follows. Specifically methylates the N7 position of guanine in position 527 of 16S rRNA. The polypeptide is Ribosomal RNA small subunit methyltransferase G (Xylella fastidiosa (strain M23)).